The primary structure comprises 398 residues: Acetate kinase (398 aa).

Asparagine 9 is a Mg(2+) binding site. Lysine 16 is an ATP binding site. Substrate is bound at residue arginine 90. Residue aspartate 147 is the Proton donor/acceptor of the active site. ATP-binding positions include 207-211 (HIGNG), 282-284 (DLR), and 330-334 (GVGEN). A Mg(2+)-binding site is contributed by glutamate 384.

Belongs to the acetokinase family. Homodimer. The cofactor is Mg(2+). Mn(2+) serves as cofactor.

It is found in the cytoplasm. The catalysed reaction is acetate + ATP = acetyl phosphate + ADP. The protein operates within metabolic intermediate biosynthesis; acetyl-CoA biosynthesis; acetyl-CoA from acetate: step 1/2. Catalyzes the formation of acetyl phosphate from acetate and ATP. Can also catalyze the reverse reaction. In Staphylococcus haemolyticus (strain JCSC1435), this protein is Acetate kinase.